The primary structure comprises 957 residues: Glycine dehydrogenase (decarboxylating) (957 aa).

At Lys-708 the chain carries N6-(pyridoxal phosphate)lysine.

Belongs to the GcvP family. As to quaternary structure, the glycine cleavage system is composed of four proteins: P, T, L and H. The cofactor is pyridoxal 5'-phosphate.

The catalysed reaction is N(6)-[(R)-lipoyl]-L-lysyl-[glycine-cleavage complex H protein] + glycine + H(+) = N(6)-[(R)-S(8)-aminomethyldihydrolipoyl]-L-lysyl-[glycine-cleavage complex H protein] + CO2. In terms of biological role, the glycine cleavage system catalyzes the degradation of glycine. The P protein binds the alpha-amino group of glycine through its pyridoxal phosphate cofactor; CO(2) is released and the remaining methylamine moiety is then transferred to the lipoamide cofactor of the H protein. This is Glycine dehydrogenase (decarboxylating) from Shigella boydii serotype 18 (strain CDC 3083-94 / BS512).